A 235-amino-acid polypeptide reads, in one-letter code: MDMSLVFFSHLNMCESKEKTFFKLMHGSGKEETNIEAKIRAKEKRNRLSLLLQRPDFHGETHTSRSALLAKETRVSSEEALKWAESFDKLLSHRDGVDAFTRFLKTEFSEENIEFWVACEDFKKCTEPQQLILKAKSIYEKFIKNDAPKEVNLDFHTKEVITKSIAQPTLHSFDAAQSRVCQLMEHDSYKRFLKSEIYLHLIEGRPQRPTNLRRRSRSFTYNEFQDVKSDVAIWL.

Serine 49 bears the Phosphoserine mark. Positions 86–202 (SFDKLLSHRD…LKSEIYLHLI (117 aa)) constitute an RGS domain. Serine 216 and serine 218 each carry phosphoserine.

The protein localises to the cytoplasm. Its function is as follows. Inhibits signal transduction by increasing the GTPase activity of G protein alpha subunits thereby driving them into their inactive GDP-bound form. Binds to G(i) alpha-1, G(i) alpha-2, G(i) alpha-3 and G(q) alpha. The sequence is that of Regulator of G-protein signaling 18 (Rgs18) from Rattus norvegicus (Rat).